A 115-amino-acid polypeptide reads, in one-letter code: Small ribosomal subunit protein uS13 (115 aa).

Residues 92–115 form a disordered region; it reads RRGLPVRGQNTKNNARTRKGSKRK. The span at 106–115 shows a compositional bias: basic residues; that stretch reads ARTRKGSKRK.

Belongs to the universal ribosomal protein uS13 family. As to quaternary structure, part of the 30S ribosomal subunit. Forms a loose heterodimer with protein S19. Forms two bridges to the 50S subunit in the 70S ribosome.

Located at the top of the head of the 30S subunit, it contacts several helices of the 16S rRNA. In the 70S ribosome it contacts the 23S rRNA (bridge B1a) and protein L5 of the 50S subunit (bridge B1b), connecting the 2 subunits; these bridges are implicated in subunit movement. Contacts the tRNAs in the A and P-sites. This is Small ribosomal subunit protein uS13 from Lactobacillus gasseri (strain ATCC 33323 / DSM 20243 / BCRC 14619 / CIP 102991 / JCM 1131 / KCTC 3163 / NCIMB 11718 / NCTC 13722 / AM63).